The following is a 101-amino-acid chain: Chaperone modulatory protein CbpM (101 aa).

This sequence belongs to the CbpM family.

In terms of biological role, interacts with CbpA and inhibits both the DnaJ-like co-chaperone activity and the DNA binding activity of CbpA. Together with CbpA, modulates the activity of the DnaK chaperone system. Does not inhibit the co-chaperone activity of DnaJ. In Escherichia coli (strain K12 / MC4100 / BW2952), this protein is Chaperone modulatory protein CbpM.